The following is a 499-amino-acid chain: Probable alpha-L-arabinofuranosidase B (499 aa).

An N-terminal signal peptide occupies residues 1–17 (MFSRRNLLALGLAATVS). The interval 18–335 (AGPCDIYEAG…ENIVAAKYVV (318 aa)) is catalytic. 3 cysteine pairs are disulfide-bonded: Cys-21-Cys-31, Cys-81-Cys-86, and Cys-176-Cys-177. The N-linked (GlcNAc...) asparagine glycan is linked to Asn-83. N-linked (GlcNAc...) asparagine glycosylation occurs at Asn-202. Asp-219 is a binding site for substrate. The active-site Nucleophile is Glu-221. Substrate is bound by residues Asn-222, Asn-223, Gly-296, His-416, Asn-418, Phe-419, Asp-435, His-463, Glu-465, Leu-468, and Asp-488. The interval 336–499 (GSLVSGPSFT…SFEIETAFAS (164 aa)) is ABD. A disulfide bridge links Cys-401 with Cys-439.

Belongs to the glycosyl hydrolase 54 family.

The protein localises to the secreted. It carries out the reaction Hydrolysis of terminal non-reducing alpha-L-arabinofuranoside residues in alpha-L-arabinosides.. The protein operates within glycan metabolism; L-arabinan degradation. Functionally, alpha-L-arabinofuranosidase involved in the degradation of arabinoxylan, a major component of plant hemicellulose. Able to hydrolyze 1,5-, 1,3- and 1,2-alpha-linkages not only in L-arabinofuranosyl oligosaccharides, but also in polysaccharides containing terminal non-reducing L-arabinofuranoses in side chains, like L-arabinan, arabinogalactan and arabinoxylan. In Aspergillus awamori (Black koji mold), this protein is Probable alpha-L-arabinofuranosidase B (abfB).